Reading from the N-terminus, the 2138-residue chain is Non-reducing polyketide synthase rads2 (2138 aa).

An N-terminal acylcarrier protein transacylase (SAT) domain region spans residues 11–249 (LIFGDQTDSW…NPLNIHALQH (239 aa)). The region spanning 373–804 (SGRIAIVGMA…GGNACMLLED (432 aa)) is the Ketosynthase family 3 (KS3) domain. Catalysis depends on for beta-ketoacyl synthase activity residues cysteine 549, histidine 684, and histidine 724. Positions 901-1184 (VFVFGGQGSH…KGVCTSFVRA (284 aa)) are malonyl-CoA:ACP transacylase (MAT) domain. The active-site For acyl/malonyl transferase activity is serine 992. The N-terminal hotdog fold stretch occupies residues 1291 to 1437 (AQYVVQESPS…KDVQRLQADW (147 aa)). Residues 1291 to 1610 (AQYVVQESPS…FHEISNATLK (320 aa)) enclose the PKS/mFAS DH domain. The tract at residues 1303-1607 (KKIQVTFRAS…GLEFHEISNA (305 aa)) is product template (PT) domain. The interval 1459 to 1610 (HGHRFQPDIF…FHEISNATLK (152 aa)) is C-terminal hotdog fold. The interval 1618-1666 (SKSVLKPDNAAPLKAPEKKEDATPTAPKKSADPGKEEEEEGDTATPAAV) is disordered. Positions 1666-1740 (VGEFEVIIQT…DLRRAFAMAP (75 aa)) constitute a Carrier domain. At serine 1700 the chain carries O-(pantetheine 4'-phosphoryl)serine. A compositionally biased stretch (low complexity) spans 1740-1771 (PSSSSSTSASESVSESLDDSSSTSRSATPSSS). 2 disordered regions span residues 1740-1781 (PSSS…GFVE) and 1807-1828 (QATKVQPQAPAATAADNDSSPA). The thioesterase (TE) domain stretch occupies residues 1860-2006 (ADGTGSIATY…TRRHLGAMFS (147 aa)).

The protein operates within secondary metabolite biosynthesis. Its function is as follows. Non-reducing polyketide synthase; part of the gene cluster that mediates the biosynthesis of radicicol, a resorcylic acid lactone (RAL) that irreversibly inhibits the HSP90 molecular chaperone, an important target for cancer chemotherapy. The cluster encodes only two apparent post-PKS enzymes, a cytochrome P450 monooxygenase (radP) and a non-heme halogenase (radH) that introduce the epoxide and the chlorine, respectively. If this cluster includes all the genes required for radicicol biosynthesis, the remaining structural features of radicicol are presumably generated by the PKSs rads1 and rads2. The C-2' ketone could arise if the R-PKS rads1 and NR-PKS rads2 each carry out four iterations, in contrast to the five iteration-three iteration split for the hypothemycin PKSs. The origin of the cis 5',6' double bond is not known. The radicicol R-PKS rads1 ER domain may catalyze either double bond isomerization or reduction in the third iteration. In Floropilus chiversii (Chaetomium chiversii), this protein is Non-reducing polyketide synthase rads2.